The sequence spans 225 residues: Glycerol-3-phosphate acyltransferase (225 aa).

The next 6 helical transmembrane spans lie at 1–21, 56–76, 95–115, 134–154, 159–178, and 182–201; these read MAIW…LGSF, GPGL…VALV, IGLW…LGHS, VLLV…ALVV, IVSL…MFVA, and LAYV…RHWA.

It belongs to the PlsY family. As to quaternary structure, probably interacts with PlsX.

Its subcellular location is the cell inner membrane. It catalyses the reaction an acyl phosphate + sn-glycerol 3-phosphate = a 1-acyl-sn-glycero-3-phosphate + phosphate. Its pathway is lipid metabolism; phospholipid metabolism. Catalyzes the transfer of an acyl group from acyl-phosphate (acyl-PO(4)) to glycerol-3-phosphate (G3P) to form lysophosphatidic acid (LPA). This enzyme utilizes acyl-phosphate as fatty acyl donor, but not acyl-CoA or acyl-ACP. The chain is Glycerol-3-phosphate acyltransferase from Acaryochloris marina (strain MBIC 11017).